The chain runs to 537 residues: CTP synthase (537 aa).

The segment at 1–267 (MAKFVFVTGG…ADIVLDKLGI (267 aa)) is amidoligase domain. Ser13 is a CTP binding site. Ser13 is a UTP binding site. 14-19 (SLGKGI) contributes to the ATP binding site. Tyr54 contacts L-glutamine. Residue Asp71 participates in ATP binding. 2 residues coordinate Mg(2+): Asp71 and Glu141. Residues 148 to 150 (DIE), 188 to 193 (KTKPTQ), and Lys224 contribute to the CTP site. Residues 188-193 (KTKPTQ) and Lys224 each bind UTP. Residues 292-534 (TIALVGKYVS…IGAARKYKES (243 aa)) form the Glutamine amidotransferase type-1 domain. An L-glutamine-binding site is contributed by Gly354. Residue Cys381 is the Nucleophile; for glutamine hydrolysis of the active site. L-glutamine contacts are provided by residues 382-385 (LGMQ), Glu405, and Arg462. Catalysis depends on residues His507 and Glu509.

Belongs to the CTP synthase family. Homotetramer.

The enzyme catalyses UTP + L-glutamine + ATP + H2O = CTP + L-glutamate + ADP + phosphate + 2 H(+). It catalyses the reaction L-glutamine + H2O = L-glutamate + NH4(+). The catalysed reaction is UTP + NH4(+) + ATP = CTP + ADP + phosphate + 2 H(+). It participates in pyrimidine metabolism; CTP biosynthesis via de novo pathway; CTP from UDP: step 2/2. Its activity is regulated as follows. Allosterically activated by GTP, when glutamine is the substrate; GTP has no effect on the reaction when ammonia is the substrate. The allosteric effector GTP functions by stabilizing the protein conformation that binds the tetrahedral intermediate(s) formed during glutamine hydrolysis. Inhibited by the product CTP, via allosteric rather than competitive inhibition. Functionally, catalyzes the ATP-dependent amination of UTP to CTP with either L-glutamine or ammonia as the source of nitrogen. Regulates intracellular CTP levels through interactions with the four ribonucleotide triphosphates. This Pelotomaculum thermopropionicum (strain DSM 13744 / JCM 10971 / SI) protein is CTP synthase.